The following is a 123-amino-acid chain: Small ribosomal subunit protein uS13 (123 aa).

The interval Gly-95 to Lys-123 is disordered. Residues Ala-107 to Lys-123 are compositionally biased toward basic residues.

It belongs to the universal ribosomal protein uS13 family. As to quaternary structure, part of the 30S ribosomal subunit. Forms a loose heterodimer with protein S19. Forms two bridges to the 50S subunit in the 70S ribosome.

Functionally, located at the top of the head of the 30S subunit, it contacts several helices of the 16S rRNA. In the 70S ribosome it contacts the 23S rRNA (bridge B1a) and protein L5 of the 50S subunit (bridge B1b), connecting the 2 subunits; these bridges are implicated in subunit movement. Contacts the tRNAs in the A and P-sites. In Maridesulfovibrio salexigens (strain ATCC 14822 / DSM 2638 / NCIMB 8403 / VKM B-1763) (Desulfovibrio salexigens), this protein is Small ribosomal subunit protein uS13.